The chain runs to 366 residues: tRNA(Met) cytidine acetate ligase (366 aa).

Residues 7–20 (IAEFNPFHNGHQYL), G101, N145, and R170 each bind ATP.

This sequence belongs to the TmcAL family.

Its subcellular location is the cytoplasm. It catalyses the reaction cytidine(34) in elongator tRNA(Met) + acetate + ATP = N(4)-acetylcytidine(34) in elongator tRNA(Met) + AMP + diphosphate. In terms of biological role, catalyzes the formation of N(4)-acetylcytidine (ac(4)C) at the wobble position of elongator tRNA(Met), using acetate and ATP as substrates. First activates an acetate ion to form acetyladenylate (Ac-AMP) and then transfers the acetyl group to tRNA to form ac(4)C34. This chain is tRNA(Met) cytidine acetate ligase, found in Pediococcus pentosaceus (strain ATCC 25745 / CCUG 21536 / LMG 10740 / 183-1w).